The following is a 2332-amino-acid chain: MHTTDCFIALVHAIREIRALFLPRTTGKMELTLHNGEKKTFYSRPNNHDNCWLNTILQLFRYVDEPFFDWVYNSPENLTLEAINQLEELTGLELHEGGPPALVIWNIKHLLHTGIGTASRPSEVCMVDGTDMCLADFHAGIFLKGQEHAVFACVTSNGWYAIDDEEFYPWTPDPSDVLVFVPYDQEPLNGDWKAMVQRKLKGAGQSSPATGSQNQSGNTGSIINNYYMQQYQNSMDTQLGDNAISGGSNEGSTDTTSTHTTNTQNNDWFSKLASSAFTGLFGALLADKKTEETTLLEDRILTTRNGHTISTTQSSVGVTYGYSTGEDHVAGPNTSGLETRVVQAERFFKKFLFDWTTDKPFGHLEKLELPADHHGVFGHLVESYAYMRNGWDVEVSAVGNQFNGGCLLVAMVPEWKEFEQREKYQLTLFPHQFISPRTNMTAHITVPYLGVNRYDQYKKHKPWTLVVMVVSPLTVSDTAAAQIKVYANIAPTYVHVAGELPSKEGIFPVACSDGYGGLVTTDPKTADPAYGKVYNPPRTNYPGRFTNLLDVAEACPTFLCFDDGKPYVVTRTDDTRLLAKFDVSLAAKHMSNTYLSGIAQYYAQYSGTINLHFMFTGSTDSKARYMVAYIPPGVEVPPDTPERAAHCIHAEWDTGLNSKFTFSIPYVSAADYAYTASDTAETTNVQGWVCIYQITHGKAENDTLVVSASAGKDFELRLPIDPRQQTTAVGESADPVTTTVENYGGETQTQRRHHTDVGFIMDRFVKINSLSPTHVIDLMQTHQHGLVGALLRAATYYFSDLEIVVRHDGNLTWVPNGAPEAALSNTSNPTAYNKAPFTRLALPYTAPHRVLATVYNGTNKYSTGGPRRGDTGSPAARAAKQLPASFNYGAIRAVTIHELLVRMKRAELYCPRPLLAIEVSSQDRHKQKIIAPARQLLNFDLLKLAGDVESNPGPFFFSDVRSNFSKLVETINQMQEDMSTKHGPDFNRLVSAFEELAAGVKAIRTGLDEAKPWYKLIKLLSRLSCMAAVAARSKDPVLVAIMLADTGLEILDSTFVVKKISDSLSSLFHVPAPVFSFGAPILLAGLVKVASSFFRSTPEDLERAEKQLKARDINDIFAILKNGEWLVKLILAIRDWIKAWIASEEKFVTMTDLVPGILEKQHDLNDPSKYKEAKEWLDNARQACLKSGNVHIANLCKVVAPAPSKPRPEPVVVCLRGKSGQGKSFLANVLAQAISTHFTGRTDSVWYCPPDPDHFDGYNQQTVVVMDDLGQNPDGKDFKYFAQMVSTTGFIPPMASLEDKGKPFNSKVIIATTNLYSGFTPRTMVCPDALNRRFHFDIDVSAKDGYKINNKLDITKALEDTHTNPVAMFQYDCALLNGMAVEMKRMQQDMFKPQPPLQNVYQLVQEVIDRVELHEKVSSHPIFKQISIPSQKSVLYFLIKKGQHEAAIEFFEGMVHDSVKEELRPLIQQTSFVKRAFKRLKENFEIVALCLTLLANIVIMIRETRKRQKMVDDAVNEYIEKANITTDDKTLDEAEKNPLETSGASTVGFRERTLPGQKARDDVNSEPAQPAEEQPQAEGPYAGPLERQRPLKVRAKLPQQEGPYAGPMERQKPLKVKAKAPVVKEGPYEGPVKKPVALKVRAKNLIVTESGAPPTDLQKMVMGNTKPVELILDGKTVAICCATGVFGTAYLVPRHLFAEKYDKIMLDGRAMTDSDYRVFEFEIKVKGQDMLSDAALMVLHRGNRVRDITKHFRDTARMKKGTPVVGVINNADVGRLIFSGEALTYKDIVVCMDGDTMPGLFAYRAATKAGYCGGAVLAKDGADTFIVGTHSAGGNGVGYCSCVSRSMLLKMKAHIDPEPHHEGLIVDTRDAEERVHVMRKTKLAPTVAHGVFNPEFGPAALSNKDPRLNEGVVLDEVIFSKHKGDTKMSEEDKALFRRCAADYASRLHSVLGTANAPLSIYEAIKGVDGLDAMEPDTAPGLPWALQGKRRGALIDFENGTVGPEVEAALKLMEKREYKFVCQTFLKDEIRPMEKVRAGKTRIVDVLPVEHILYTRMMIGRFCAQMHSNNGPQIGSAVGCNPDVDWQRFGTHFAQYRNVWDVDYSAFDANHCSDAMNIMFEEVFRTDFGFHPNAEWILKTLVNTEHAYENKRHTVEGGMPSGCSATSIINTILNNIYVLYALRRHYEGVELDTYTMISYGDDIVVASDYDLDFEALKPHFKSLGQTITPADKSDKGFVLGHSITDVTFLKRHFHMDYGTGFYKPVMASKTLEAILSFARRGTIQEKLISVAGLAVHSGPDEYRRLFEPFQGLFEIPSYRSLYLRWVNAVCGDA.

The Peptidase C28 domain occupies 1 to 201 (MHTTDCFIAL…WKAMVQRKLK (201 aa)). Residues 1 to 1480 (MHTTDCFIAL…SFVKRAFKRL (1480 aa)) lie on the Cytoplasmic side of the membrane. Residues Cys-51, His-148, and Asp-163 each act as for leader protease activity in the active site. Disordered regions lie at residues 199–218 (KLKG…QSGN) and 238–265 (QLGD…NTQN). The N-myristoyl glycine; by host moiety is linked to residue Gly-202. Composition is skewed to polar residues over residues 204–218 (GQSS…QSGN) and 238–251 (QLGD…SNEG). Residues 252–265 (STDTTSTHTTNTQN) show a composition bias toward low complexity. The segment at 789–797 (ALLRAATYY) is antigenic epitope. The short motif at 868–870 (RGD) is the Cell attachment site element. In terms of domain architecture, SF3 helicase spans 1189–1353 (NVHIANLCKV…DGYKINNKLD (165 aa)). ATP is bound at residue 1217–1224 (GKSGQGKS). The stretch at 1481–1501 (KENFEIVALCLTLLANIVIMI) is an intramembrane region. Over 1502-2332 (RETRKRQKMV…RWVNAVCGDA (831 aa)) the chain is Cytoplasmic. Composition is skewed to basic and acidic residues over residues 1529-1538 (KTLDEAEKNP) and 1549-1563 (FRER…RDDV). The tract at residues 1529–1584 (KTLDEAEKNPLETSGASTVGFRERTLPGQKARDDVNSEPAQPAEEQPQAEGPYAGP) is disordered. A compositionally biased stretch (low complexity) spans 1566–1578 (EPAQPAEEQPQAE). Tyr-1581, Tyr-1604, and Tyr-1628 each carry O-(5'-phospho-RNA)-tyrosine. In terms of domain architecture, Peptidase C3 spans 1652-1848 (APPTDLQKMV…YCSCVSRSML (197 aa)). The active-site For protease 3C activity; Proton donor/acceptor is His-1695. Residues Asp-1733 and Cys-1812 each act as for protease 3C activity in the active site. The Nuclear localization signal motif lies at 1878–1886 (MRKTKLAPT). A RdRp catalytic domain is found at 2096–2214 (RNVWDVDYSA…ASDYDLDFEA (119 aa)). Catalysis depends on Asp-2200, which acts as the For RdRp activity.

It belongs to the picornaviruses polyprotein family. As to quaternary structure, interacts with host ISG15. Capsid protein VP1: Interacts (via R-G-D motif) with host ITGAV/ITGB6. Interacts (via R-G-D motif) with host ITGAV/ITGB6. Interacts with host MAVS; this interaction inhibits binding of host TRAF3 to MAVS, thereby suppressing interferon-mediated responses. In terms of assembly, forms homooligomers. As to quaternary structure, homohexamer. Interacts with host VIM. Interacts with host BECN1. Interacts with host DCTN3. In terms of assembly, interacts with RNA-dependent RNA polymerase; this interaction allows 3B-1 to binds 2 polymerases and act as a primer. It also allows the recruitment of the RNA-dependent RNA polymerase to host membranes. As to quaternary structure, interacts with RNA-dependent RNA polymerase; this interaction allows 3B-2 to act as a primer. Interacts with RNA-dependent RNA polymerase; this interaction allows 3B-3 to act as a primer. In terms of assembly, interacts with 3B-1; this interaction allows 3B-1 to binds 2 polymerases and act as a primer. It also allows the recruitment of the RNA-dependent RNA polymerase to host membranes. Interacts with 3B-2; this interaction allows 3B-2 to act as a primer. Interacts with 3B-3; this interaction allows 3B-3 to act as a primer. Post-translationally, removes six residues from its own C-terminus, generating sLb(pro). Specific enzymatic cleavages in vivo by the viral proteases yield a variety of precursors and mature proteins. The polyprotein seems to be cotranslationally cleaved at the 2A/2B junction by a ribosomal skip from one codon to the next without formation of a peptide bond. This process would release the L-P1-2A peptide from the translational complex. In terms of processing, during virion maturation, immature virions are rendered infectious following cleavage of VP0 into VP4 and VP2. This maturation seems to be an autocatalytic event triggered by the presence of RNA in the capsid and is followed by a conformational change of the particle. Post-translationally, myristoylation is required during RNA encapsidation and formation of the mature virus particle. Uridylylated by the polymerase and covalently linked to the 5'-end of genomic RNA. These uridylylated forms act as a nucleotide-peptide primer for the polymerase.

The protein resides in the host nucleus. It is found in the host cytoplasm. It localises to the virion. The protein localises to the host endoplasmic reticulum membrane. Its subcellular location is the host cytoplasmic vesicle membrane. The enzyme catalyses Autocatalytically cleaves itself from the polyprotein of the foot-and-mouth disease virus by hydrolysis of a Lys-|-Gly bond, but then cleaves host cell initiation factor eIF-4G at bonds -Gly-|-Arg- and -Lys-|-Arg-.. It catalyses the reaction a ribonucleoside 5'-triphosphate + H2O = a ribonucleoside 5'-diphosphate + phosphate + H(+). It carries out the reaction RNA(n) + a ribonucleoside 5'-triphosphate = RNA(n+1) + diphosphate. The catalysed reaction is Selective cleavage of Gln-|-Gly bond in the poliovirus polyprotein. In other picornavirus reactions Glu may be substituted for Gln, and Ser or Thr for Gly.. Its function is as follows. Autocatalytically cleaves itself from the polyprotein at the L/VP0 junction. Also cleaves the host translation initiation factors EIF4G1 and EIF4G3, in order to shut off the capped cellular mRNA transcription. Plays a role in counteracting host innate antiviral response using diverse mechanisms. Possesses a deubiquitinase activity acting on both 'Lys-48' and 'Lys-63'-linked polyubiquitin chains. In turn, inhibits the ubiquitination and subsequent activation of key signaling molecules of type I IFN response such as host RIGI, TBK1, TRAF3 and TRAF6. Inhibits host NF-kappa-B activity by inducing a decrease in RELA mRNA levels. Cleaves a peptide bond in the C-terminus of host ISG15, resulting in the damaging of this modifier that can no longer be attached to target proteins. Also cleaves host G3BP1 and G3BP2 in order to inhibit cytoplasmic stress granules assembly. Lies on the inner surface of the capsid shell. After binding to the host receptor, the capsid undergoes conformational changes. Capsid protein VP4 is released, capsid protein VP1 N-terminus is externalized, and together, they shape a pore in the host membrane through which the viral genome is translocated into the host cell cytoplasm. After genome has been released, the channel shrinks. In terms of biological role, forms an icosahedral capsid of pseudo T=3 symmetry with capsid proteins VP1 and VP3. The capsid is composed of 60 copies of each capsid protein organized in the form of twelve pentamers and encloses the viral positive strand RNA genome. Upon acidifcation in the endosome, dissociates into pentamers. Functionally, forms an icosahedral capsid of pseudo T=3 symmetry with capsid proteins VP0 and VP3. The capsid is composed of 60 copies of each capsid protein organized in the form of twelve pentamers and encloses the viral positive strand RNA genome. Upon acidifcation in the endosome, dissociates into pentamers. Its function is as follows. Forms an icosahedral capsid of pseudo T=3 symmetry with capsid proteins VP2 and VP3. The capsid is composed of 60 copies of each capsid protein organized in the form of twelve pentamers and encloses the viral positive strand RNA genome. Mediates cell entry by attachment to an integrin receptor, usually host ITGAV/ITGB6. In addition, targets host MAVS to suppress type I IFN pathway. Upon acidifcation in the endosome, dissociates into pentamers. Mediates self-processing of the polyprotein by a translational effect termed 'ribosome skipping'. Mechanistically, 2A-mediated cleavage occurs between the C-terminal glycine and the proline of the downstream protein 2B. In the case of foot-and-mouth disease virus, the 2A oligopeptide is post-translationally 'trimmed' from the C-terminus of the upstream protein 1D by 3C proteinase. In terms of biological role, plays an essential role in the virus replication cycle by acting as a viroporin. Creates a pore in the host endoplasmic reticulum and as a consequence releases Ca2+ in the cytoplasm of infected cell. In turn, high levels of cytoplasmic calcium may trigger membrane trafficking and transport of viral ER-associated proteins to viroplasms, sites of viral genome replication. Functionally, associates with and induces structural rearrangements of intracellular membranes. Triggers host autophagy by interacting with host BECN1 and thereby promotes viral replication. Participates in viral replication and interacts with host DHX9. Displays RNA-binding, nucleotide binding and NTPase activities. May play a role in virion morphogenesis and viral RNA encapsidation by interacting with the capsid protein VP3. Its function is as follows. Plays important roles in virus replication, virulence and host range. Cooperates with host DDX56 to inhibit IRF3 nuclear translocation and subsequent type I interferon production. Covalently linked to the 5'-end of both the positive-strand and negative-strand genomic RNAs. Acts as a genome-linked replication primer. In terms of biological role, cysteine protease that generates mature viral proteins from the precursor polyprotein. In addition to its proteolytic activity, binds to viral RNA and thus influences viral genome replication. RNA and substrate bind cooperatively to the protease. Functionally, RNA-directed RNA polymerase 3D-POL replicates genomic and antigenomic RNA by recognizing replications specific signals. Covalently attaches UMP to a tyrosine of VPg, which is used to prime RNA synthesis. The positive stranded RNA genome is first replicated at virus induced membranous vesicles, creating a dsRNA genomic replication form. This dsRNA is then used as template to synthesize positive stranded RNA genomes. ss(+)RNA genomes are either translated, replicated or encapsidated. This is Genome polyprotein from Foot-and-mouth disease virus (isolate -/Germany/A5Westerwald/1951 serotype A) (FMDV).